We begin with the raw amino-acid sequence, 121 residues long: Ribosome-binding factor A (121 aa).

This sequence belongs to the RbfA family. As to quaternary structure, monomer. Binds 30S ribosomal subunits, but not 50S ribosomal subunits or 70S ribosomes.

It localises to the cytoplasm. In terms of biological role, one of several proteins that assist in the late maturation steps of the functional core of the 30S ribosomal subunit. Associates with free 30S ribosomal subunits (but not with 30S subunits that are part of 70S ribosomes or polysomes). Required for efficient processing of 16S rRNA. May interact with the 5'-terminal helix region of 16S rRNA. The polypeptide is Ribosome-binding factor A (Paraburkholderia xenovorans (strain LB400)).